Consider the following 335-residue polypeptide: Histidinol-phosphate aminotransferase (335 aa).

The residue at position 202 (Lys202) is an N6-(pyridoxal phosphate)lysine.

The protein belongs to the class-II pyridoxal-phosphate-dependent aminotransferase family. Histidinol-phosphate aminotransferase subfamily. Homodimer. It depends on pyridoxal 5'-phosphate as a cofactor.

The catalysed reaction is L-histidinol phosphate + 2-oxoglutarate = 3-(imidazol-4-yl)-2-oxopropyl phosphate + L-glutamate. The protein operates within amino-acid biosynthesis; L-histidine biosynthesis; L-histidine from 5-phospho-alpha-D-ribose 1-diphosphate: step 7/9. This Thermotoga maritima (strain ATCC 43589 / DSM 3109 / JCM 10099 / NBRC 100826 / MSB8) protein is Histidinol-phosphate aminotransferase.